We begin with the raw amino-acid sequence, 108 residues long: Nucleoid-associated protein BARBAKC583_1239 (108 aa).

It belongs to the YbaB/EbfC family. Homodimer.

It localises to the cytoplasm. The protein localises to the nucleoid. Its function is as follows. Binds to DNA and alters its conformation. May be involved in regulation of gene expression, nucleoid organization and DNA protection. The protein is Nucleoid-associated protein BARBAKC583_1239 of Bartonella bacilliformis (strain ATCC 35685 / KC583 / Herrer 020/F12,63).